A 221-amino-acid polypeptide reads, in one-letter code: Probable septum site-determining protein MinC (221 aa).

This sequence belongs to the MinC family. As to quaternary structure, interacts with MinD and FtsZ.

Cell division inhibitor that blocks the formation of polar Z ring septums. Rapidly oscillates between the poles of the cell to destabilize FtsZ filaments that have formed before they mature into polar Z rings. Prevents FtsZ polymerization. This chain is Probable septum site-determining protein MinC, found in Shewanella denitrificans (strain OS217 / ATCC BAA-1090 / DSM 15013).